We begin with the raw amino-acid sequence, 217 residues long: MRIILLGPPGAGKGTQAQLICKRYNIPQISTGDMLRAAIREGTELGLKAKSVMESGGLVSDELIIGLVKERIAQPDCVNGCIFDGFPRTIPQAEALEKEGISIDHVIEIDVPDEEIVKRLSGRRQHPASGRVYHVVYNPPKVEGKDDETGEDLVQRPDDQEETIRKRLASYHTETEQLVGFYQGRAASGENAPTYDKLDGLRTIEDVQKDLFNILDK.

10–15 serves as a coordination point for ATP; it reads GAGKGT. An NMP region spans residues 30–59; it reads STGDMLRAAIREGTELGLKAKSVMESGGLV. AMP contacts are provided by residues T31, R36, 57–59, 85–88, and Q92; these read GLV and GFPR. Positions 122–159 are LID; sequence GRRQHPASGRVYHVVYNPPKVEGKDDETGEDLVQRPDD. ATP contacts are provided by residues R123 and 132–133; that span reads VY. Residues R156 and R167 each contribute to the AMP site. ATP is bound at residue R202.

The protein belongs to the adenylate kinase family. Monomer.

It localises to the cytoplasm. It catalyses the reaction AMP + ATP = 2 ADP. It participates in purine metabolism; AMP biosynthesis via salvage pathway; AMP from ADP: step 1/1. Catalyzes the reversible transfer of the terminal phosphate group between ATP and AMP. Plays an important role in cellular energy homeostasis and in adenine nucleotide metabolism. In Acinetobacter baumannii (strain AB307-0294), this protein is Adenylate kinase.